Here is a 408-residue protein sequence, read N- to C-terminus: DNA primase DnaG (408 aa).

In terms of domain architecture, Toprim spans 172–248; it reads DSIIIVEGRA…HVDYIARAPP (77 aa). Mg(2+)-binding residues include glutamate 178, aspartate 222, and aspartate 224. A disordered region spans residues 279–304; sequence AAGEKAETPQQPPPQQPVPQQEVREE.

Belongs to the archaeal DnaG primase family. Forms a ternary complex with MCM helicase and DNA. Component of the archaeal exosome complex. Mg(2+) is required as a cofactor.

The enzyme catalyses ssDNA + n NTP = ssDNA/pppN(pN)n-1 hybrid + (n-1) diphosphate.. RNA polymerase that catalyzes the synthesis of short RNA molecules used as primers for DNA polymerase during DNA replication. Also part of the exosome, which is a complex involved in RNA degradation. Acts as a poly(A)-binding protein that enhances the interaction between heteromeric, adenine-rich transcripts and the exosome. The sequence is that of DNA primase DnaG from Pyrobaculum aerophilum (strain ATCC 51768 / DSM 7523 / JCM 9630 / CIP 104966 / NBRC 100827 / IM2).